A 470-amino-acid chain; its full sequence is Adenosylhomocysteinase (470 aa).

Substrate is bound by residues Thr61, Asp136, and Glu196. Residue Thr197–Thr199 coordinates NAD(+). Substrate-binding residues include Lys226 and Asp230. NAD(+)-binding positions include Asn231, Gly260–Gly265, Glu283, Asn318, Ile339–His341, and Asn384.

This sequence belongs to the adenosylhomocysteinase family. NAD(+) is required as a cofactor.

The protein resides in the cytoplasm. The catalysed reaction is S-adenosyl-L-homocysteine + H2O = L-homocysteine + adenosine. It participates in amino-acid biosynthesis; L-homocysteine biosynthesis; L-homocysteine from S-adenosyl-L-homocysteine: step 1/1. Its function is as follows. May play a key role in the regulation of the intracellular concentration of adenosylhomocysteine. In Aromatoleum aromaticum (strain DSM 19018 / LMG 30748 / EbN1) (Azoarcus sp. (strain EbN1)), this protein is Adenosylhomocysteinase.